Reading from the N-terminus, the 251-residue chain is Imidazole glycerol phosphate synthase subunit HisF (251 aa).

Catalysis depends on residues aspartate 11 and aspartate 130.

Belongs to the HisA/HisF family. As to quaternary structure, heterodimer of HisH and HisF.

The protein localises to the cytoplasm. The enzyme catalyses 5-[(5-phospho-1-deoxy-D-ribulos-1-ylimino)methylamino]-1-(5-phospho-beta-D-ribosyl)imidazole-4-carboxamide + L-glutamine = D-erythro-1-(imidazol-4-yl)glycerol 3-phosphate + 5-amino-1-(5-phospho-beta-D-ribosyl)imidazole-4-carboxamide + L-glutamate + H(+). The protein operates within amino-acid biosynthesis; L-histidine biosynthesis; L-histidine from 5-phospho-alpha-D-ribose 1-diphosphate: step 5/9. IGPS catalyzes the conversion of PRFAR and glutamine to IGP, AICAR and glutamate. The HisF subunit catalyzes the cyclization activity that produces IGP and AICAR from PRFAR using the ammonia provided by the HisH subunit. The polypeptide is Imidazole glycerol phosphate synthase subunit HisF (Prosthecochloris aestuarii (strain DSM 271 / SK 413)).